The primary structure comprises 118 residues: Small ribosomal subunit protein uS13 (118 aa).

A disordered region spans residues 94-118; it reads SLPLRGQRTKTNARTRKGPRKPIKR.

Belongs to the universal ribosomal protein uS13 family. Part of the 30S ribosomal subunit. Forms a loose heterodimer with protein S19. Forms two bridges to the 50S subunit in the 70S ribosome.

Functionally, located at the top of the head of the 30S subunit, it contacts several helices of the 16S rRNA. In the 70S ribosome it contacts the 23S rRNA (bridge B1a) and protein L5 of the 50S subunit (bridge B1b), connecting the 2 subunits; these bridges are implicated in subunit movement. Contacts the tRNAs in the A and P-sites. This Photobacterium profundum (strain SS9) protein is Small ribosomal subunit protein uS13.